The following is a 198-amino-acid chain: Calcium channel flower (198 aa).

The next 3 membrane-spanning stretches (helical) occupy residues 36 to 56, 67 to 89, and 114 to 134; these read LGIVAAFFAILFGLWNVLSII, IIQMIAGFIVMVLEAPCCFVCIE, and AVPPIFMCFGLASLFGSGLIF.

Belongs to the calcium channel flower family. Homomultimer. Associates with the dally/ magu complex.

The protein resides in the cell membrane. Its subcellular location is the cytoplasmic vesicle. It is found in the secretory vesicle. The protein localises to the synaptic vesicle membrane. It localises to the presynaptic cell membrane. The protein resides in the endosome. With respect to regulation, channel activity is inhibited by La(3+), which reduces Ca(2+) influx and thus inhibits it's function in promoting activity-dependent bulk endocytosis (ADBE) in response to high stimuli. In terms of biological role, transmembrane protein which mediates synaptic endocytosis, fitness-based cell culling, neuronal culling, morphogen gradient scaling, and calcium transport. Regulates synaptic endocytosis and hence couples exo- with endocytosis. Controls two major modes of synaptic vesicle (SV) endocytosis in the synaptic boutons of neuromuscular junctions (NMJs); Ca(2+) channel-independent Clathrin-mediated endocytosis (CME) in response to mild stimulation, and Ca(2+) channel-dependent activity-dependent bulk endocytosis (ADBE) in response to strong stimulation. Functions in ADBE and subsequent SV reformation from bulk endosomes by initiating Ca(2+) channel-dependent phosphatidylinositol 4,5-bisphosphate (PtdIns(4,5)P2) compartmentalization in synaptic boutons. There it acts at the periactive zone to provide the low Ca(2+) levels required to initiate Calcineurin activation and upregulate PtdIns(4,5)P2. Conversely PtdIns(4,5)P2 enhances fwe Ca(2+) channel-activity, establishing a positive feedback loop that induces PtdIns(4,5)P2 microdomain at the periactive zone. These microdomains trigger bulk membrane invagination (i.e. ADBE) by triggering actin polymerization while also promoting localization of fwe to bulk endosomes, thereby removing the ADBE trigger to reduce endocytosis and prevent excess membrane uptake. PtdIns(4,5)P2 then promotes SV reformation from the bulk endosomes, to coordinate ADBE and subsequent SV reformation. Different combinations of the flower isoforms at the cell membrane are also required for the identification and elimination of suboptimal or supernumerary cells during development, regeneration, and adulthood. Required for the recognition and elimination of unfit cells in the developing wing during cell competition. In the developing pupal retina, mediates the elimination of unwanted postmitotic neurons, including supernumerary photoreceptor neurons that form at the periphery of the retina and are contained within incomplete ommatidia units. Also required for efficient elimination and replacement of old neurons by newly generated neurons during regeneration in the adult brain following mechanical injury. Downstream of the flower fitness fingerprints, cells identified as unwanted or unfit are eliminated via apoptosis through the expression of ahuizotl (azot). However, the cells marked for elimination by the flower isoforms only undergo apoptosis if additional thresholds are met; (1) their neighboring fit/healthy cells express different levels of the fwe isoforms, and (2) the levels of the protective signal SPARC expressed by the loser or unwanted cells are unable to inhibit caspase activation. These additional thresholds for flower-mediated apoptosis, allows useful cells to recover from transient and limited stress before they are unnecessarily eliminated. Functions with dally and magu in a mechanism of scaling, which utilises apoptosis to ensure that the dpp morphogen gradient, which mediates organ growth, remains proportional to the size of the growing wing. In this mechanism, fwe represses dally- and Magu-dependent activity in expanding the gradient, and dally/Magu inhibits fwe-dependent apoptosis to keep cell death rate low. When the levels of these different proteins are optimally regulated the gradient correctly scales with organ growth but when this fails, fwe-mediated apoptosis is activated to trim the developing tissue to match the correct size of the gradient. This chain is Calcium channel flower, found in Drosophila persimilis (Fruit fly).